Reading from the N-terminus, the 107-residue chain is Large ribosomal subunit protein P1 (107 aa).

A compositionally biased stretch (low complexity) spans 68–82; the sequence is PATAGAPAAAGAAAP. The tract at residues 68 to 107 is disordered; the sequence is PATAGAPAAAGAAAPAEEKKEEKEEEKEESDEDMGFGLFD. The span at 90–101 shows a compositional bias: acidic residues; sequence KEEEKEESDEDM.

The protein belongs to the eukaryotic ribosomal protein P1/P2 family. As to quaternary structure, P1 and P2 exist as dimers at the large ribosomal subunit.

It is found in the cytoplasm. Plays an important role in the elongation step of protein synthesis. This is Large ribosomal subunit protein P1 from Penicillium brevicompactum.